Here is a 330-residue protein sequence, read N- to C-terminus: Mas-related G-protein coupled receptor member X2 (330 aa).

At 1-33 the chain is on the extracellular side; sequence MDPTTPAWGNESTTMNGNDQALPLLCGKETLIP. Residues 34–54 form a helical membrane-spanning segment; the sequence is VFLILFIALVGLVGNGFVLWL. The Cytoplasmic segment spans residues 55-63; sequence LGFCMRRNA. Residues 64–84 traverse the membrane as a helical segment; it reads FSVYVLSLAGADFLFLCFQLI. The Extracellular segment spans residues 85–96; it reads NCLVYLSNFFCS. Residues 97-117 traverse the membrane as a helical segment; the sequence is ISIDFPSFFTTVMTCAYLAGL. Residues 118-144 lie on the Cytoplasmic side of the membrane; the sequence is SMLSTISTERCLSVLWPIWYRCRRPRH. Residues 145 to 165 form a helical membrane-spanning segment; that stretch reads LSAVVCVLLWALSLLLSILEG. Topologically, residues 166–184 are extracellular; sequence KFCGFFFSDGDSGWCQTFD. A helical membrane pass occupies residues 185–205; it reads FITAAWLIFLFMVLCGSSLAL. Residues 206–228 lie on the Cytoplasmic side of the membrane; it reads LVRILCGSRGLPLTRLYLTILLT. A helical transmembrane segment spans residues 229 to 249; the sequence is VLVFLLCGLPFGIQWFLILWI. At 250 to 264 the chain is on the extracellular side; the sequence is WENSDVLFCHIHPVS. Residues 265–285 form a helical membrane-spanning segment; the sequence is VVLSSLNSSANPIIYFFVGTF. Over 286-330 the chain is Cytoplasmic; sequence RKQWRLQQPILKLALQRALQDTAEVDHSEGCFRQGTPEMSRSSLV.

It belongs to the G-protein coupled receptor 1 family. Mas subfamily.

It localises to the cell membrane. Mast cell-specific receptor for basic secretagogues, i.e. cationic amphiphilic drugs, as well as endo- or exogenous peptides, consisting of a basic head group and a hydrophobic core. Recognizes and binds small molecules containing a cyclized tetrahydroisoquinoline (THIQ), such as non-steroidal neuromuscular blocking drugs (NMBDs), including tubocurarine and atracurium. In response to these compounds, mediates pseudo-allergic reactions characterized by histamine release, inflammation and airway contraction. The chain is Mas-related G-protein coupled receptor member X2 (MRGPRX2) from Pongo pygmaeus (Bornean orangutan).